The sequence spans 140 residues: Nucleoside diphosphate kinase (140 aa).

Residues K11, F59, R87, T93, R104, and N114 each coordinate ATP. H117 functions as the Pros-phosphohistidine intermediate in the catalytic mechanism.

Belongs to the NDK family. Homotetramer. It depends on Mg(2+) as a cofactor.

Its subcellular location is the cytoplasm. It catalyses the reaction a 2'-deoxyribonucleoside 5'-diphosphate + ATP = a 2'-deoxyribonucleoside 5'-triphosphate + ADP. The catalysed reaction is a ribonucleoside 5'-diphosphate + ATP = a ribonucleoside 5'-triphosphate + ADP. Major role in the synthesis of nucleoside triphosphates other than ATP. The ATP gamma phosphate is transferred to the NDP beta phosphate via a ping-pong mechanism, using a phosphorylated active-site intermediate. This is Nucleoside diphosphate kinase from Persephonella marina (strain DSM 14350 / EX-H1).